We begin with the raw amino-acid sequence, 218 residues long: Probable 2-aminoethanethiol dioxygenase (218 aa).

Fe cation serves as cofactor.

It carries out the reaction cysteamine + O2 = hypotaurine + H(+). In Dictyostelium discoideum (Social amoeba), this protein is Probable 2-aminoethanethiol dioxygenase (ado-1).